Reading from the N-terminus, the 264-residue chain is NAD-capped RNA hydrolase NudC (264 aa).

A substrate-binding site is contributed by Arg-70. Residues Cys-99 and Cys-102 each coordinate Zn(2+). Glu-112 contributes to the substrate binding site. Residues Cys-117 and Cys-120 each coordinate Zn(2+). Tyr-125 serves as a coordination point for substrate. The Nudix hydrolase domain occupies 126–253; it reads PVICPSIIVA…TIARKLIHVT (128 aa). 3 residues coordinate a divalent metal cation: Ala-162, Glu-178, and Glu-182. The Nudix box motif lies at 163 to 184; it reads GFVEVGETFEQAVQREVFEETG. 196–203 contributes to the substrate binding site; it reads QPWAFPNS. Glu-223 lines the a divalent metal cation pocket. Ala-246 provides a ligand contact to substrate.

This sequence belongs to the Nudix hydrolase family. NudC subfamily. As to quaternary structure, homodimer. It depends on Mg(2+) as a cofactor. Mn(2+) serves as cofactor. Zn(2+) is required as a cofactor.

The enzyme catalyses a 5'-end NAD(+)-phospho-ribonucleoside in mRNA + H2O = a 5'-end phospho-adenosine-phospho-ribonucleoside in mRNA + beta-nicotinamide D-ribonucleotide + 2 H(+). It catalyses the reaction NAD(+) + H2O = beta-nicotinamide D-ribonucleotide + AMP + 2 H(+). It carries out the reaction NADH + H2O = reduced beta-nicotinamide D-ribonucleotide + AMP + 2 H(+). Functionally, mRNA decapping enzyme that specifically removes the nicotinamide adenine dinucleotide (NAD) cap from a subset of mRNAs by hydrolyzing the diphosphate linkage to produce nicotinamide mononucleotide (NMN) and 5' monophosphate mRNA. The NAD-cap is present at the 5'-end of some mRNAs and stabilizes RNA against 5'-processing. Has preference for mRNAs with a 5'-end purine. Catalyzes the hydrolysis of a broad range of dinucleotide pyrophosphates. This Haemophilus influenzae (strain 86-028NP) protein is NAD-capped RNA hydrolase NudC.